Here is a 905-residue protein sequence, read N- to C-terminus: Transcriptional regulator MNL1 (905 aa).

The segment covering 1-29 (MDSHNNIDQSVSELLSDPASVQQSYNSQL) has biased composition (polar residues). Disordered stretches follow at residues 1–34 (MDSHNNIDQSVSELLSDPASVQQSYNSQLRGPEF), 312–340 (QTQAQAQAHQQQQQQSQQQHSPQDLASHT), 383–419 (MDQVPSSLHRPSFDLYNHRPSIDSQHSQQSQQRNARY), 434–460 (SEKNTNHNNRSPPTPPTSTSSPQNLLS), 525–544 (TKEEPEDELMQPKKVKKPKR), 584–613 (NISSHHSSGTPSITTGAGGNTLEHSISESS), 625–671 (NVGK…GTVE), and 685–733 (PASE…TSST). Positions 312 to 334 (QTQAQAQAHQQQQQQSQQQHSPQ) are enriched in low complexity. Residues 439 to 460 (NHNNRSPPTPPTSTSSPQNLLS) are compositionally biased toward low complexity. Polar residues predominate over residues 584 to 598 (NISSHHSSGTPSITT). Residues 628–639 (KRKNKSYRKPKG) are compositionally biased toward basic residues. 2 stretches are compositionally biased toward low complexity: residues 647–669 (QQQQLPLSSGTAGGTSSNNSTGT) and 690–710 (SSLLDNASAGNASASSSEASS). 2 C2H2-type zinc fingers span residues 832-855 (YLCNLCQRRFKRHEHLKRHFRSLH) and 861-883 (YNCDICHKKFSRSDNLNQHLKIH). The tract at residues 885–905 (QEDEKDCADAETGVGMDDASG) is disordered.

The protein resides in the nucleus. Transcription factor that activates stress response genes via SLE (STRE-like) elements. Required for adaptation to weak acid stress such as acetic acid stress, but seems not involved in the response to heat, osmotic, ethanol, nutrient, oxidative, or heavy-metal stress. Activates a subset of the genes that are repressed by NRG1. This chain is Transcriptional regulator MNL1 (MNL1), found in Candida albicans (strain SC5314 / ATCC MYA-2876) (Yeast).